The chain runs to 208 residues: Uracil phosphoribosyltransferase (208 aa).

5-phospho-alpha-D-ribose 1-diphosphate is bound by residues Arg78, Arg103, and 130–138 (DPMLATGGS). Residues Ile193 and 198-200 (GDA) contribute to the uracil site. Asp199 is a binding site for 5-phospho-alpha-D-ribose 1-diphosphate.

This sequence belongs to the UPRTase family. It depends on Mg(2+) as a cofactor.

It catalyses the reaction UMP + diphosphate = 5-phospho-alpha-D-ribose 1-diphosphate + uracil. The protein operates within pyrimidine metabolism; UMP biosynthesis via salvage pathway; UMP from uracil: step 1/1. With respect to regulation, allosterically activated by GTP. Its function is as follows. Catalyzes the conversion of uracil and 5-phospho-alpha-D-ribose 1-diphosphate (PRPP) to UMP and diphosphate. This Photorhabdus laumondii subsp. laumondii (strain DSM 15139 / CIP 105565 / TT01) (Photorhabdus luminescens subsp. laumondii) protein is Uracil phosphoribosyltransferase.